Here is a 455-residue protein sequence, read N- to C-terminus: Zinc finger SWIM domain-containing protein 1 (455 aa).

Residues 264 to 288 (ASLSLAETPQDSHTPSEASAENPNT) form a disordered region. Residues 333–375 (MSIQILEDTHTVQPQPPASCSCYFNQAFHLPCRHILAMLSARQ) form an SWIM-type zinc finger.

This Mus musculus (Mouse) protein is Zinc finger SWIM domain-containing protein 1 (Zswim1).